We begin with the raw amino-acid sequence, 390 residues long: Peroxisomal sarcosine oxidase (390 aa).

Residue 9 to 39 participates in FAD binding; that stretch reads DAIVIGAGIQGCFTAYHLAKHRKRILLLEQF. An N6-acetyllysine modification is found at lysine 126. S-8alpha-FAD cysteine is present on cysteine 319. The Microbody targeting signal motif lies at 388-390; sequence AHL.

Belongs to the MSOX/MTOX family. FAD serves as cofactor. Expressed in the liver and kidney.

Its subcellular location is the peroxisome. The catalysed reaction is sarcosine + O2 + H2O = formaldehyde + glycine + H2O2. The enzyme catalyses L-pipecolate + O2 = L-1-piperideine-6-carboxylate + H2O2 + H(+). Metabolizes sarcosine and L-pipecolic acid. The polypeptide is Peroxisomal sarcosine oxidase (PIPOX) (Homo sapiens (Human)).